The primary structure comprises 517 residues: Amidophosphoribosyltransferase (517 aa).

At methionine 1 the chain carries N-acetylmethionine. Residues 1 to 11 constitute a propeptide that is removed on maturation; that stretch reads MELEELGIREE. Cysteine 12 functions as the Nucleophile in the catalytic mechanism. In terms of domain architecture, Glutamine amidotransferase type-2 spans 12-261; sequence CGVFGCIASG…PGEIVEISRH (250 aa). Position 280 (cysteine 280) interacts with [4Fe-4S] cluster. Serine 327, aspartate 389, and aspartate 390 together coordinate Mg(2+). Residues cysteine 426, cysteine 503, and cysteine 506 each coordinate [4Fe-4S] cluster.

The protein in the C-terminal section; belongs to the purine/pyrimidine phosphoribosyltransferase family. Homotetramer. Requires Mg(2+) as cofactor. The cofactor is [4Fe-4S] cluster. In terms of tissue distribution, ubiquitously expressed.

It catalyses the reaction 5-phospho-beta-D-ribosylamine + L-glutamate + diphosphate = 5-phospho-alpha-D-ribose 1-diphosphate + L-glutamine + H2O. It functions in the pathway purine metabolism; IMP biosynthesis via de novo pathway; N(1)-(5-phospho-D-ribosyl)glycinamide from 5-phospho-alpha-D-ribose 1-diphosphate: step 1/2. Its function is as follows. Catalyzes the formation of phosphoribosylamine from phosphoribosylpyrophosphate (PRPP) and glutamine. The polypeptide is Amidophosphoribosyltransferase (PPAT) (Homo sapiens (Human)).